The primary structure comprises 179 residues: Ribosome maturation factor RimM (179 aa).

The PRC barrel domain occupies 98–170 (PDEFWDRRLR…RIVVSGIPGL (73 aa)).

Belongs to the RimM family. In terms of assembly, binds ribosomal protein uS19.

The protein resides in the cytoplasm. Functionally, an accessory protein needed during the final step in the assembly of 30S ribosomal subunit, possibly for assembly of the head region. Essential for efficient processing of 16S rRNA. May be needed both before and after RbfA during the maturation of 16S rRNA. It has affinity for free ribosomal 30S subunits but not for 70S ribosomes. This is Ribosome maturation factor RimM from Cutibacterium acnes (strain DSM 16379 / KPA171202) (Propionibacterium acnes).